We begin with the raw amino-acid sequence, 306 residues long: UDP-N-acetylenolpyruvoylglucosamine reductase (306 aa).

The region spanning 28 to 193 (KVGGPADFLA…VSAKFSLKPG (166 aa)) is the FAD-binding PCMH-type domain. The active site involves Arg-172. Ser-222 functions as the Proton donor in the catalytic mechanism. Glu-292 is an active-site residue.

The protein belongs to the MurB family. The cofactor is FAD.

Its subcellular location is the cytoplasm. It catalyses the reaction UDP-N-acetyl-alpha-D-muramate + NADP(+) = UDP-N-acetyl-3-O-(1-carboxyvinyl)-alpha-D-glucosamine + NADPH + H(+). The protein operates within cell wall biogenesis; peptidoglycan biosynthesis. In terms of biological role, cell wall formation. The chain is UDP-N-acetylenolpyruvoylglucosamine reductase from Streptococcus mutans serotype c (strain ATCC 700610 / UA159).